The sequence spans 698 residues: Elongation factor G (698 aa).

A tr-type G domain is found at Glu-8–Asn-290. GTP-binding positions include Ala-17–Thr-24, Asp-88–His-92, and Asn-142–Asp-145.

This sequence belongs to the TRAFAC class translation factor GTPase superfamily. Classic translation factor GTPase family. EF-G/EF-2 subfamily.

The protein resides in the cytoplasm. In terms of biological role, catalyzes the GTP-dependent ribosomal translocation step during translation elongation. During this step, the ribosome changes from the pre-translocational (PRE) to the post-translocational (POST) state as the newly formed A-site-bound peptidyl-tRNA and P-site-bound deacylated tRNA move to the P and E sites, respectively. Catalyzes the coordinated movement of the two tRNA molecules, the mRNA and conformational changes in the ribosome. The protein is Elongation factor G of Halorhodospira halophila (strain DSM 244 / SL1) (Ectothiorhodospira halophila (strain DSM 244 / SL1)).